A 402-amino-acid chain; its full sequence is 4-hydroxy-3-methylbut-2-enyl diphosphate reductase (402 aa).

Cysteine 66 contacts [4Fe-4S] cluster. (2E)-4-hydroxy-3-methylbut-2-enyl diphosphate is bound at residue histidine 96. Histidine 96 serves as a coordination point for dimethylallyl diphosphate. Position 96 (histidine 96) interacts with isopentenyl diphosphate. [4Fe-4S] cluster is bound at residue cysteine 157. A (2E)-4-hydroxy-3-methylbut-2-enyl diphosphate-binding site is contributed by histidine 185. Position 185 (histidine 185) interacts with dimethylallyl diphosphate. Residue histidine 185 coordinates isopentenyl diphosphate. Catalysis depends on glutamate 187, which acts as the Proton donor. Threonine 250 serves as a coordination point for (2E)-4-hydroxy-3-methylbut-2-enyl diphosphate. Cysteine 288 is a [4Fe-4S] cluster binding site. The (2E)-4-hydroxy-3-methylbut-2-enyl diphosphate site is built by serine 317, serine 318, asparagine 319, and serine 379. Serine 317, serine 318, asparagine 319, and serine 379 together coordinate dimethylallyl diphosphate. Isopentenyl diphosphate contacts are provided by serine 317, serine 318, asparagine 319, and serine 379.

It belongs to the IspH family. [4Fe-4S] cluster is required as a cofactor.

It catalyses the reaction isopentenyl diphosphate + 2 oxidized [2Fe-2S]-[ferredoxin] + H2O = (2E)-4-hydroxy-3-methylbut-2-enyl diphosphate + 2 reduced [2Fe-2S]-[ferredoxin] + 2 H(+). The catalysed reaction is dimethylallyl diphosphate + 2 oxidized [2Fe-2S]-[ferredoxin] + H2O = (2E)-4-hydroxy-3-methylbut-2-enyl diphosphate + 2 reduced [2Fe-2S]-[ferredoxin] + 2 H(+). Its pathway is isoprenoid biosynthesis; dimethylallyl diphosphate biosynthesis; dimethylallyl diphosphate from (2E)-4-hydroxy-3-methylbutenyl diphosphate: step 1/1. It functions in the pathway isoprenoid biosynthesis; isopentenyl diphosphate biosynthesis via DXP pathway; isopentenyl diphosphate from 1-deoxy-D-xylulose 5-phosphate: step 6/6. Its function is as follows. Catalyzes the conversion of 1-hydroxy-2-methyl-2-(E)-butenyl 4-diphosphate (HMBPP) into a mixture of isopentenyl diphosphate (IPP) and dimethylallyl diphosphate (DMAPP). Acts in the terminal step of the DOXP/MEP pathway for isoprenoid precursor biosynthesis. The polypeptide is 4-hydroxy-3-methylbut-2-enyl diphosphate reductase (Nostoc punctiforme (strain ATCC 29133 / PCC 73102)).